Here is a 149-residue protein sequence, read N- to C-terminus: Cell division protein SepF (149 aa).

The protein belongs to the SepF family. In terms of assembly, homodimer. Interacts with FtsZ.

Its subcellular location is the cytoplasm. Its function is as follows. Cell division protein that is part of the divisome complex and is recruited early to the Z-ring. Probably stimulates Z-ring formation, perhaps through the cross-linking of FtsZ protofilaments. Its function overlaps with FtsA. In Pelotomaculum thermopropionicum (strain DSM 13744 / JCM 10971 / SI), this protein is Cell division protein SepF.